The primary structure comprises 219 residues: Thiopurine S-methyltransferase (219 aa).

Positions 10, 45, 66, and 123 each coordinate S-adenosyl-L-methionine.

The protein belongs to the class I-like SAM-binding methyltransferase superfamily. TPMT family.

It is found in the cytoplasm. The enzyme catalyses S-adenosyl-L-methionine + a thiopurine = S-adenosyl-L-homocysteine + a thiopurine S-methylether.. This Shewanella pealeana (strain ATCC 700345 / ANG-SQ1) protein is Thiopurine S-methyltransferase.